We begin with the raw amino-acid sequence, 455 residues long: UPF0053 protein MT1890 (455 aa).

A CNNM transmembrane domain is found at Asn2–Thr205. Helical transmembrane passes span Thr6–Ala26, Leu68–Leu88, Leu106–Val126, and Leu148–Val168. CBS domains lie at Met224 to Leu285 and Leu286 to Glu346.

Belongs to the UPF0053 family.

Its subcellular location is the cell membrane. This chain is UPF0053 protein MT1890, found in Mycobacterium tuberculosis (strain CDC 1551 / Oshkosh).